We begin with the raw amino-acid sequence, 1564 residues long: Superkiller complex protein 3 (1564 aa).

At S2 the chain carries N-acetylserine. 20 TPR repeats span residues 6–39, 40–73, 272–305, 307–339, 386–419, 420–453, 455–492, 493–527, 564–597, 598–631, 633–665, 679–713, 790–824, 826–860, 861–894, 980–1013, 1020–1054, 1056–1084, 1326–1359, and 1400–1433; these read VKTA…EKNN, YNAW…EPDQ, GPGL…SPVC, SGWY…VDNL, PGLL…YPDL, AEVH…DTEV, EYHY…DTYM, GKVF…DDTD, KWAW…DPKD, FNCW…NPES, YSVF…KEDY, MAKA…RADV, AQHL…DSNN, LYWN…EQIN, AVAW…DPSY, APAF…LQTA, NVAI…LEDI, GFAL…VESE, KWSL…NPDQ, and VPAW…ASQR.

This sequence belongs to the SKI3 family. Component of the SKI complex which consists of SKIC2, SKIC3 and SKIC8. Interacts with PAF1. As to expression, widely expressed with the highest levels observed in vascular tissues, lymph node, pituitary, lung and intestine. Not expressed in the liver.

The protein resides in the cytoplasm. The protein localises to the nucleus. Component of the SKI complex, a multiprotein complex that assists the RNA-degrading exosome during the mRNA decay and quality-control pathways. The SKI complex catalyzes mRNA extraction from 80S ribosomal complexes in the 3'-5' direction and channels mRNA to the cytosolic exosome for degradation. SKI-mediated extraction of mRNA from stalled ribosomes allow binding of the Pelota-HBS1L complex and subsequent ribosome disassembly by ABCE1 for ribosome recycling. In the nucleus, the SKI complex associates with transcriptionally active genes in a manner dependent on PAF1 complex (PAF1C). The sequence is that of Superkiller complex protein 3 from Homo sapiens (Human).